The chain runs to 183 residues: dCTP deaminase (183 aa).

DCTP is bound by residues 106-111, 130-132, Gln-151, Tyr-165, and Gln-175; these read KSTYAR and TLE. Glu-132 functions as the Proton donor/acceptor in the catalytic mechanism.

This sequence belongs to the dCTP deaminase family. Homotrimer.

It carries out the reaction dCTP + H2O + H(+) = dUTP + NH4(+). The protein operates within pyrimidine metabolism; dUMP biosynthesis; dUMP from dCTP (dUTP route): step 1/2. Functionally, catalyzes the deamination of dCTP to dUTP. This chain is dCTP deaminase, found in Acidobacterium capsulatum (strain ATCC 51196 / DSM 11244 / BCRC 80197 / JCM 7670 / NBRC 15755 / NCIMB 13165 / 161).